The following is a 392-amino-acid chain: Galactokinase (392 aa).

33 to 36 contacts substrate; sequence EHTD. ATP is bound by residues S67 and 129–135; that span reads GSGLSSS. S135 and E167 together coordinate Mg(2+). The active-site Proton acceptor is D179. Position 229 (Y229) interacts with substrate.

It belongs to the GHMP kinase family. GalK subfamily.

It is found in the cytoplasm. It carries out the reaction alpha-D-galactose + ATP = alpha-D-galactose 1-phosphate + ADP + H(+). It functions in the pathway carbohydrate metabolism; galactose metabolism. In terms of biological role, catalyzes the transfer of the gamma-phosphate of ATP to D-galactose to form alpha-D-galactose-1-phosphate (Gal-1-P). The protein is Galactokinase of Limosilactobacillus reuteri (strain DSM 20016) (Lactobacillus reuteri).